A 1394-amino-acid polypeptide reads, in one-letter code: DNA-directed RNA polymerase subunit beta'' (1394 aa).

Residues Cys-224, Cys-295, Cys-302, and Cys-305 each coordinate Zn(2+).

This sequence belongs to the RNA polymerase beta' chain family. RpoC2 subfamily. In plastids the minimal PEP RNA polymerase catalytic core is composed of four subunits: alpha, beta, beta', and beta''. When a (nuclear-encoded) sigma factor is associated with the core the holoenzyme is formed, which can initiate transcription. Zn(2+) serves as cofactor.

It is found in the plastid. The protein resides in the chloroplast. The catalysed reaction is RNA(n) + a ribonucleoside 5'-triphosphate = RNA(n+1) + diphosphate. Functionally, DNA-dependent RNA polymerase catalyzes the transcription of DNA into RNA using the four ribonucleoside triphosphates as substrates. The protein is DNA-directed RNA polymerase subunit beta'' of Vitis vinifera (Grape).